The chain runs to 542 residues: uncharacterized protein (542 aa).

At 1–78 the chain is on the extracellular side; it reads MSVQKEEYDI…EEKKLVRKMD (78 aa). A helical transmembrane segment spans residues 79–99; sequence LKIFLWVFIMFAFLDLIRKNI. At 100–119 the chain is on the cytoplasmic side; it reads ARAVSDNFIVDLKMNTNDYN. The helical transmembrane segment at 120–140 threads the bilayer; that stretch reads LGQTVYLVIFLASELPGNLLS. The Extracellular segment spans residues 141 to 147; sequence KRFGPER. Residues 148–168 traverse the membrane as a helical segment; it reads VIPVQIVLWSVICITQAGLKN. The Cytoplasmic segment spans residues 169–176; that stretch reads RGQFIATR. Residues 177–197 traverse the membrane as a helical segment; that stretch reads CLLGMVQGGFIPDNILYLSYY. Residues 198–208 are Extracellular-facing; the sequence is YTGAELTFRLS. Residues 209-229 form a helical membrane-spanning segment; that stretch reads FFWCAIPLFQILGSLLASGII. At 230–241 the chain is on the cytoplasmic side; it reads EMRGIHNLAGWQ. Residues 242–262 traverse the membrane as a helical segment; that stretch reads YLFIIEGFLSLSVGVASFYLM. At 263 to 326 the chain is on the extracellular side; the sequence is RRGPTQTGES…TLTEFDLWPL (64 aa). Residues 327–347 form a helical membrane-spanning segment; the sequence is FIQGITAFISLQTVGSYLSLI. The Cytoplasmic segment spans residues 348-359; the sequence is LKSLNYSTFLSN. The helical transmembrane segment at 360–380 threads the bilayer; the sequence is ILAIPGQALLLINLPLAALLS. The Extracellular portion of the chain corresponds to 381–387; it reads RKLKEKS. A helical membrane pass occupies residues 388 to 408; the sequence is LCVGIANVWVLPFIVSLVALP. The Cytoplasmic portion of the chain corresponds to 409-416; the sequence is TDTNPWIK. Residues 417–437 form a helical membrane-spanning segment; that stretch reads YILLTGILGLPYTHSILAGWV. The Extracellular segment spans residues 438-482; the sequence is SEISNSVRSRTVGTALYNMSAQVGAIIASNMYRNDDKPYYTRGNK. The helical transmembrane segment at 483–503 threads the bilayer; it reads ILLGFTCFNICMAVATKFYYI. The Cytoplasmic segment spans residues 504 to 542; it reads SRNKYKDRKWNSMTKEEQINYLDTTKDKGMKRLDYRFIH.

The protein belongs to the major facilitator superfamily. Allantoate permease family.

The protein resides in the membrane. This is an uncharacterized protein from Saccharomyces cerevisiae (strain ATCC 204508 / S288c) (Baker's yeast).